The chain runs to 203 residues: NADH-quinone oxidoreductase subunit C (203 aa).

Belongs to the complex I 30 kDa subunit family. As to quaternary structure, NDH-1 is composed of 14 different subunits. Subunits NuoB, C, D, E, F, and G constitute the peripheral sector of the complex.

It localises to the cell inner membrane. It carries out the reaction a quinone + NADH + 5 H(+)(in) = a quinol + NAD(+) + 4 H(+)(out). Functionally, NDH-1 shuttles electrons from NADH, via FMN and iron-sulfur (Fe-S) centers, to quinones in the respiratory chain. The immediate electron acceptor for the enzyme in this species is believed to be ubiquinone. Couples the redox reaction to proton translocation (for every two electrons transferred, four hydrogen ions are translocated across the cytoplasmic membrane), and thus conserves the redox energy in a proton gradient. The sequence is that of NADH-quinone oxidoreductase subunit C from Delftia acidovorans (strain DSM 14801 / SPH-1).